Here is a 116-residue protein sequence, read N- to C-terminus: Large ribosomal subunit protein bL17 (116 aa).

Belongs to the bacterial ribosomal protein bL17 family. Part of the 50S ribosomal subunit. Contacts protein L32.

This is Large ribosomal subunit protein bL17 from Prochlorococcus marinus (strain MIT 9515).